Reading from the N-terminus, the 154-residue chain is Lipoprotein signal peptidase (154 aa).

The next 3 helical transmembrane spans lie at 4 to 24, 62 to 82, and 84 to 104; these read IIIPIITILLIALDQLSKLWI, LFTLITIFVVGVAIIYLMKHI, and GSYWLLISLTLIISGGLGNFI. Residues Asp114 and Asp130 contribute to the active site. A helical membrane pass occupies residues 125–145; it reads IFNVADSYLTIGIICLMIALW.

Belongs to the peptidase A8 family.

The protein resides in the cell membrane. It catalyses the reaction Release of signal peptides from bacterial membrane prolipoproteins. Hydrolyzes -Xaa-Yaa-Zaa-|-(S,diacylglyceryl)Cys-, in which Xaa is hydrophobic (preferably Leu), and Yaa (Ala or Ser) and Zaa (Gly or Ala) have small, neutral side chains.. It participates in protein modification; lipoprotein biosynthesis (signal peptide cleavage). In terms of biological role, this protein specifically catalyzes the removal of signal peptides from prolipoproteins. This chain is Lipoprotein signal peptidase, found in Streptococcus agalactiae serotype V (strain ATCC BAA-611 / 2603 V/R).